The chain runs to 434 residues: Glutamyl-tRNA reductase (434 aa).

Residues 49–52 (TCNR), Ser-109, 114–116 (EPQ), and Gln-120 each bind substrate. Cys-50 functions as the Nucleophile in the catalytic mechanism. Position 189-194 (189-194 (GAGEMC)) interacts with NADP(+).

It belongs to the glutamyl-tRNA reductase family. Homodimer.

The catalysed reaction is (S)-4-amino-5-oxopentanoate + tRNA(Glu) + NADP(+) = L-glutamyl-tRNA(Glu) + NADPH + H(+). It functions in the pathway porphyrin-containing compound metabolism; protoporphyrin-IX biosynthesis; 5-aminolevulinate from L-glutamyl-tRNA(Glu): step 1/2. Its function is as follows. Catalyzes the NADPH-dependent reduction of glutamyl-tRNA(Glu) to glutamate 1-semialdehyde (GSA). The chain is Glutamyl-tRNA reductase from Trichlorobacter lovleyi (strain ATCC BAA-1151 / DSM 17278 / SZ) (Geobacter lovleyi).